The primary structure comprises 258 residues: Regulatory protein RecX (258 aa).

The protein belongs to the RecX family.

It localises to the cytoplasm. In terms of biological role, modulates RecA activity. In Streptococcus equi subsp. zooepidemicus (strain MGCS10565), this protein is Regulatory protein RecX.